An 87-amino-acid chain; its full sequence is Small ribosomal subunit protein uS15c (87 aa).

Belongs to the universal ribosomal protein uS15 family. As to quaternary structure, part of the 30S ribosomal subunit.

The protein resides in the plastid. Its subcellular location is the chloroplast. This Atropa belladonna (Belladonna) protein is Small ribosomal subunit protein uS15c (rps15).